The primary structure comprises 359 residues: Guanine nucleotide-binding protein subunit alpha-11 (359 aa).

Residues C9 and C10 are each lipidated (S-palmitoyl cysteine). The G-alpha domain maps to 38–359; it reads RELKLLLLGT…QLNLKEYNLV (322 aa). The G1 motif stretch occupies residues 41 to 54; sequence KLLLLGTGESGKST. GTP is bound by residues 46–53 and 180–183; these read GTGESGKS and LRVR. Mg(2+) is bound at residue S53. The segment at 178 to 186 is G2 motif; the sequence is DVLRVRVPT. T186 contacts Mg(2+). Residues 201–210 are G3 motif; that stretch reads FRMVDVGGQR. The G4 motif stretch occupies residues 270-277; it reads ILFLNKKD. GTP is bound by residues 274–277 and A331; that span reads NKKD. Residues 329-334 are G5 motif; sequence TCATDT.

It belongs to the G-alpha family. G(q) subfamily. In terms of assembly, g proteins are composed of 3 units; alpha, beta and gamma. The alpha chain contains the guanine nucleotide binding site. Interacts with RGS22. Interacts with NTSR1.

The protein resides in the cell membrane. It is found in the cytoplasm. The enzyme catalyses GTP + H2O = GDP + phosphate + H(+). Its function is as follows. Guanine nucleotide-binding proteins (G proteins) function as transducers downstream of G protein-coupled receptors (GPCRs) in numerous signaling cascades. The alpha chain contains the guanine nucleotide binding site and alternates between an active, GTP-bound state and an inactive, GDP-bound state. Signaling by an activated GPCR promotes GDP release and GTP binding. The alpha subunit has a low GTPase activity that converts bound GTP to GDP, thereby terminating the signal. Both GDP release and GTP hydrolysis are modulated by numerous regulatory proteins. Signaling is mediated via phospholipase C-beta-dependent inositol lipid hydrolysis for signal propagation: activates phospholipase C-beta: following GPCR activation, GNA11 activates PLC-beta (PLCB1, PLCB2, PLCB3 or PLCB4), leading to production of diacylglycerol (DAG) and inositol 1,4,5-trisphosphate (IP3). Transduces FFAR4 signaling in response to long-chain fatty acids (LCFAs). Together with GNAQ, required for heart development. In the respiratory epithelium, transmits OXGR1-dependent signals that lead to downstream intracellular Ca(2+) release and mucocilliary clearance of airborne pathogens. The polypeptide is Guanine nucleotide-binding protein subunit alpha-11 (GNA11) (Bos taurus (Bovine)).